The sequence spans 1323 residues: ABC transporter C family member 12 (1323 aa).

An ABC transmembrane type-1 1 domain is found at 110-396; sequence HCISLFFYSI…LPILIALGIQ (287 aa). A run of 6 helical transmembrane segments spans residues 111–131, 152–172, 227–247, 252–272, 338–358, and 375–395; these read CISL…PEIL, MGYY…FCNY, VFGI…CLAL, IGWP…FNGL, ILIA…FSTY, and SYLN…ALGI. Positions 428-652 constitute an ABC transporter 1 domain; the sequence is VYMKNSTTTW…KLEFASLLQE (225 aa). 464–471 is a binding site for ATP; sequence GSVGSGKS. The tract at residues 657 to 695 is disordered; sequence ENTKGDDSDDDDDKKDDDKKEEKVEKPKQSDKDGTLISE. The span at 672–690 shows a compositional bias: basic and acidic residues; that stretch reads DDDKKEEKVEKPKQSDKDG. The next 5 membrane-spanning stretches (helical) occupy residues 712-732, 772-792, 840-860, 862-882, and 952-972; these read VTAG…LETG, IYIG…FSFF, LIAT…ATLI, ISII…LFFI, and WLGL…CIFI. One can recognise an ABC transmembrane type-1 2 domain in the interval 720-1010; that stretch reads FLFAMILFLL…GVLQAADTET (291 aa). Residues 1047–1281 form the ABC transporter 2 domain; that stretch reads IKFDNLVMRY…QNGLLTWLVN (235 aa). 1081 to 1088 contacts ATP; sequence GRTGAGKS.

It belongs to the ABC transporter superfamily. ABCC family. Conjugate transporter (TC 3.A.1.208) subfamily.

The protein localises to the membrane. The chain is ABC transporter C family member 12 (abcC12) from Dictyostelium discoideum (Social amoeba).